A 342-amino-acid polypeptide reads, in one-letter code: tRNA N6-adenosine threonylcarbamoyltransferase (342 aa).

Fe cation is bound by residues histidine 111 and histidine 115. Residues 133 to 137 (AVSGG), aspartate 166, glycine 179, aspartate 183, and asparagine 272 contribute to the substrate site. Aspartate 300 is a binding site for Fe cation.

This sequence belongs to the KAE1 / TsaD family. Fe(2+) serves as cofactor.

Its subcellular location is the cytoplasm. The catalysed reaction is L-threonylcarbamoyladenylate + adenosine(37) in tRNA = N(6)-L-threonylcarbamoyladenosine(37) in tRNA + AMP + H(+). Required for the formation of a threonylcarbamoyl group on adenosine at position 37 (t(6)A37) in tRNAs that read codons beginning with adenine. Is involved in the transfer of the threonylcarbamoyl moiety of threonylcarbamoyl-AMP (TC-AMP) to the N6 group of A37, together with TsaE and TsaB. TsaD likely plays a direct catalytic role in this reaction. In Geobacter sp. (strain M21), this protein is tRNA N6-adenosine threonylcarbamoyltransferase.